The sequence spans 737 residues: Delta and Notch-like epidermal growth factor-related receptor (737 aa).

An N-terminal signal peptide occupies residues 1–25; sequence MPPRRAQAPGAPLLPVLALLPLLLG. Residues 26 to 640 lie on the Extracellular side of the membrane; sequence AGPQSGCLAS…LTNMPRHSLY (615 aa). 2 consecutive EGF-like domains span residues 44 to 92 and 94 to 133; these read APGP…TYCQ and VADPCASNPCHHGNCSSSSSSSSDSYLCICNDGYEGLNCE. The interval 44–133 is interaction with NOTCH1; the sequence is APGPCASQPC…NDGYEGLNCE (90 aa). 6 cysteine pairs are disulfide-bonded: Cys48/Cys59, Cys53/Cys80, Cys82/Cys91, Cys98/Cys108, Cys103/Cys121, and Cys123/Cys132. A glycan (N-linked (GlcNAc...) asparagine) is linked at Asn204. EGF-like domains are found at residues 309 to 348, 349 to 390, 392 to 428, 430 to 466, and 468 to 503; these read PGDSHSNDLECSGKGKCATKPSEATFSCTCQDQYIGTFCE, EFDA…ELCQ, KIDYCVLDPCRNGATCVSSLSGFTCQCLEGYFGSACE, KVDPCMSSPCQNNGTCYVDGVHFTCSCSPGFTGPTCA, and LVDFCALSPCAHGMCRSVGTSYKCLCDPGYHGLYCE. Intrachain disulfides connect Cys319/Cys336, Cys338/Cys347, Cys353/Cys364, Cys358/Cys378, Cys380/Cys389, Cys396/Cys407, Cys401/Cys416, Cys418/Cys427, Cys434/Cys445, Cys439/Cys454, Cys456/Cys465, Cys472/Cys482, Cys477/Cys491, Cys493/Cys502, Cys509/Cys520, Cys514/Cys529, Cys531/Cys540, Cys547/Cys558, Cys552/Cys567, Cys569/Cys578, Cys585/Cys596, Cys590/Cys605, and Cys607/Cys616. The 37-residue stretch at 505–541 folds into the EGF-like 8; calcium-binding domain; that stretch reads EYNECLSAPCLNAATCRDLINGYECVCLAEYKGTHCE. One can recognise an EGF-like 9 domain in the interval 543–579; it reads YKDPCANISCLNGGTCDSEGLNGTCICAPGFTGEECD. An N-linked (GlcNAc...) asparagine glycan is attached at Asn564. One can recognise an EGF-like 10; calcium-binding domain in the interval 581-617; that stretch reads DINECDSNPCHHAGTCLDQPNGYTCHCPHGWVGANCE. Residues 641-661 form a helical membrane-spanning segment; the sequence is IIIGALCVAFILMLIILIVGI. The Cytoplasmic portion of the chain corresponds to 662-737; sequence CRISRIEYQG…LVTLIKTKDL (76 aa). Residues 677 to 680 form an interaction with AP1G1 and somatodendritic targeting region; it reads YEEF. Ser685 is subject to Phosphoserine. At Tyr711 the chain carries Phosphotyrosine. Phosphothreonine is present on Thr714. Tyr721 carries the post-translational modification Phosphotyrosine. Ser722 is modified (phosphoserine).

Interacts with AP1G1. Interacts with NOTCH1. In terms of processing, N-glycosylated. In terms of tissue distribution, specifically expressed in brain neurons (at protein level).

It localises to the cell membrane. Functionally, mediates neuron-glia interaction during astrocytogenesis. May promote differentiation of Bergmann glia during cerebellar development by activating DELTEX-dependent NOTCH1 signaling. This chain is Delta and Notch-like epidermal growth factor-related receptor (Dner), found in Mus musculus (Mouse).